The chain runs to 159 residues: Ribosomal RNA large subunit methyltransferase H (159 aa).

S-adenosyl-L-methionine contacts are provided by residues L76, G108, and 127–132 (FSKMTL).

This sequence belongs to the RNA methyltransferase RlmH family. As to quaternary structure, homodimer.

It localises to the cytoplasm. It catalyses the reaction pseudouridine(1915) in 23S rRNA + S-adenosyl-L-methionine = N(3)-methylpseudouridine(1915) in 23S rRNA + S-adenosyl-L-homocysteine + H(+). In terms of biological role, specifically methylates the pseudouridine at position 1915 (m3Psi1915) in 23S rRNA. This Bacillus thuringiensis subsp. konkukian (strain 97-27) protein is Ribosomal RNA large subunit methyltransferase H.